Consider the following 180-residue polypeptide: Endoribonuclease YbeY (180 aa).

Zn(2+)-binding residues include H118, H122, and H128.

It belongs to the endoribonuclease YbeY family. Zn(2+) is required as a cofactor.

Its subcellular location is the cytoplasm. Single strand-specific metallo-endoribonuclease involved in late-stage 70S ribosome quality control and in maturation of the 3' terminus of the 16S rRNA. In Rhodococcus opacus (strain B4), this protein is Endoribonuclease YbeY.